A 531-amino-acid chain; its full sequence is Splicing factor ESS-2 (531 aa).

Disordered regions lie at residues 104 to 163 and 453 to 531; these read RTPI…RKKK and PFAS…GDFF. Positions 105–114 are enriched in polar residues; it reads TPITTRSTTE. Composition is skewed to low complexity over residues 125 to 136 and 464 to 477; these read TPGPSSASTSSA and SRPSSSKRSTTPGS. Residues 480 to 498 are compositionally biased toward polar residues; it reads SRGSTTPGSSWSQGAQTPG.

It belongs to the ESS2 family.

It is found in the nucleus. Regulates pre-mRNA splicing. This is Splicing factor ESS-2 (ess-2) from Caenorhabditis elegans.